A 140-amino-acid chain; its full sequence is Protein SamA (140 aa).

Catalysis depends on for autocatalytic cleavage activity residues Ser-61 and Lys-98.

It belongs to the peptidase S24 family.

Functionally, involved in UV protection and mutation. This Salmonella typhimurium (strain LT2 / SGSC1412 / ATCC 700720) protein is Protein SamA (samA).